The chain runs to 237 residues: UPF0173 metal-dependent hydrolase BCAN_B0597 (237 aa).

Belongs to the UPF0173 family.

The chain is UPF0173 metal-dependent hydrolase BCAN_B0597 from Brucella canis (strain ATCC 23365 / NCTC 10854 / RM-666).